The sequence spans 259 residues: UPF0246 protein PP_1289 (259 aa).

Belongs to the UPF0246 family.

This is UPF0246 protein PP_1289 from Pseudomonas putida (strain ATCC 47054 / DSM 6125 / CFBP 8728 / NCIMB 11950 / KT2440).